The chain runs to 125 residues: Small ribosomal subunit protein uS13 (125 aa).

The segment at 95–125 is disordered; sequence GLPVNGQRTRTNARTRKGGKKTVANKKKVTK. The segment covering 105 to 125 has biased composition (basic residues); sequence TNARTRKGGKKTVANKKKVTK.

This sequence belongs to the universal ribosomal protein uS13 family. In terms of assembly, part of the 30S ribosomal subunit. Forms a loose heterodimer with protein S19. Forms two bridges to the 50S subunit in the 70S ribosome.

Its function is as follows. Located at the top of the head of the 30S subunit, it contacts several helices of the 16S rRNA. In the 70S ribosome it contacts the 23S rRNA (bridge B1a) and protein L5 of the 50S subunit (bridge B1b), connecting the 2 subunits; these bridges are implicated in subunit movement. Contacts the tRNAs in the A and P-sites. The sequence is that of Small ribosomal subunit protein uS13 from Leptospira borgpetersenii serovar Hardjo-bovis (strain L550).